The primary structure comprises 170 residues: Lipoprotein signal peptidase (170 aa).

Transmembrane regions (helical) follow at residues 11-31, 41-61, 69-89, and 95-115; these read LGWL…KAHF, IVVI…AAFS, WQRW…VVWL, and DDTW…GNLY. Active-site residues include Asp-125 and Asp-144. Residues 136–156 form a helical membrane-spanning segment; sequence YFPAFNFADSAITVGAIMLAL.

This sequence belongs to the peptidase A8 family.

The protein localises to the cell inner membrane. It catalyses the reaction Release of signal peptides from bacterial membrane prolipoproteins. Hydrolyzes -Xaa-Yaa-Zaa-|-(S,diacylglyceryl)Cys-, in which Xaa is hydrophobic (preferably Leu), and Yaa (Ala or Ser) and Zaa (Gly or Ala) have small, neutral side chains.. The protein operates within protein modification; lipoprotein biosynthesis (signal peptide cleavage). Functionally, this protein specifically catalyzes the removal of signal peptides from prolipoproteins. This chain is Lipoprotein signal peptidase, found in Pseudomonas fluorescens.